The chain runs to 191 residues: Akirin-1 (191 aa).

The segment at 17–70 (LLSPGSPKRRRCAPLPGPTPGLRPPDAEPPPLQMQTPPASLQQPAPPGSERRLP) is disordered. A Phosphoserine modification is found at Ser-22. The Nuclear localization signal motif lies at 23–28 (PKRRRC). Pro residues predominate over residues 31 to 48 (LPGPTPGLRPPDAEPPPL). Residues 49 to 59 (QMQTPPASLQQ) show a composition bias toward polar residues. Position 71 is a phosphothreonine (Thr-71). The SYVS motif motif lies at 188 to 191 (SYVS).

Belongs to the akirin family. Expressed in macrophages and satellite cells.

The protein resides in the nucleus. Its function is as follows. Molecular adapter that acts as a bridge between proteins, and which is involved skeletal muscle development. Functions as a signal transducer for MSTN during skeletal muscle regeneration and myogenesis. May regulate chemotaxis of both macrophages and myoblasts by reorganising actin cytoskeleton, leading to more efficient lamellipodia formation via a PI3 kinase dependent pathway. In contrast to AKIRIN2, not involved in nuclear import of proteasomes. In Mus musculus (Mouse), this protein is Akirin-1.